The chain runs to 84 residues: Toxin Cex12 (84 aa).

Positions 1 to 19 are cleaved as a signal peptide; the sequence is MNSLLMITTCLILVGTVWA. The LCN-type CS-alpha/beta domain maps to 20-83; it reads NDGYLFDKRK…ISRTPGKTCR (64 aa). 4 disulfides stabilise this stretch: cysteine 31–cysteine 82, cysteine 35–cysteine 58, cysteine 44–cysteine 63, and cysteine 48–cysteine 65.

This sequence belongs to the long (4 C-C) scorpion toxin superfamily. Sodium channel inhibitor family. Beta subfamily. As to expression, expressed by the venom gland.

It localises to the secreted. Its function is as follows. Beta toxins bind voltage-independently at site-4 of sodium channels (Nav) and shift the voltage of activation toward more negative potentials thereby affecting sodium channel activation and promoting spontaneous and repetitive firing. The sequence is that of Toxin Cex12 from Centruroides exilicauda (Bark scorpion).